The chain runs to 584 residues: ATP synthase subunit alpha, mitochondrial (584 aa).

The transit peptide at 1–24 (MRRFGSKFASGLASRCALACPLAS) directs the protein to the mitochondrion. ATP-binding positions include 207–214 (DRQTGKTS) and glutamine 464.

The protein belongs to the ATPase alpha/beta chains family. As to quaternary structure, F-type ATPases have 2 components, F(1) - the catalytic core - and F(o) - the membrane proton channel. F(1) has five subunits: alpha(3), beta(3), gamma(1), delta(1), epsilon(1), plus the additional subunit P18 (Tb427.05.1710) that is not present in F(1)F(o) ATP synthase from metazoa. Subunit P18 (Tb927.5.1710) interacts with the alpha subunit with a 1:1 stoichiometry; the interaction is direct. Subunit gamma is part of the central stalk. F(o) has three main subunits: a, b and c. The trypanosomal ATPase complex contains additional subunits that are not present in the F(1)F(o) ATP synthase from metazoa.

Its subcellular location is the mitochondrion. It localises to the mitochondrion inner membrane. Mitochondrial membrane ATP synthase (F(1)F(o) ATP synthase) produces ATP from ADP in the presence of a proton gradient across the membrane which is generated by electron transport complexes of the respiratory chain. F-type ATPases consist of two structural domains, F(1) - containing the extramembraneous catalytic core, and F(o) - containing the membrane proton channel, linked together by a central stalk and a peripheral stalk. During catalysis, ATP synthesis in the catalytic domain of F(1) is coupled via a rotary mechanism of the central stalk subunits to proton translocation. Subunits alpha and beta form the catalytic core in F(1). Rotation of the central stalk against the surrounding alpha(3)beta(3) subunits leads to hydrolysis of ATP in three separate catalytic sites on the beta subunits. Subunit alpha does not bear the catalytic high-affinity ATP-binding sites. Contrary to the procyclic, insect form that requires F(1)F(o) ATP synthase for ATP synthesis, the bloodstream form relies on ATP hydrolysis by F(1)F(o) ATP synthase to maintain its mitochondrial membrane potential. This is ATP synthase subunit alpha, mitochondrial from Trypanosoma brucei brucei.